A 375-amino-acid polypeptide reads, in one-letter code: MSKRDYYEVLGVSKSASKDEIKKAYRKLSKKYHPDINKESGADEKFKEVKEAYEALSDDQKRAQYDQFGHTDPNQGFGGGFGGGGDFGGFGFDDIFSSIFGGGTRRRDPNAPRQGADLQYTMTLSFEDAAFGKETIIEIPREENCETCKGSGAKPGTKPDTCSHCGGSGQLNVEQNTPFGKVVNRRVCHHCEGTGKIIKNKCSDCGGTGKVKKRKKINVTIPAGVDDGQQLRVPGQGEPGVNGGPAGDLFVVFHVRAHEFFERDGDDIYCEMPLTFAQAALGDEVEVPTLHGKVKLKIPAGTQTGTKFRLRGKGVQNVRGYGQGDQHIVVRVVTPTNLTDKQKDIIREFAEVSGNLPDEQEMSFFDKVKRAFKGE.

The 65-residue stretch at 5 to 69 folds into the J domain; that stretch reads DYYEVLGVSK…QKRAQYDQFG (65 aa). The CR-type zinc-finger motif lies at 132 to 214; it reads GKETIIEIPR…CGGTGKVKKR (83 aa). Zn(2+)-binding residues include Cys-145, Cys-148, Cys-162, Cys-165, Cys-188, Cys-191, Cys-202, and Cys-205. CXXCXGXG motif repeat units follow at residues 145–152, 162–169, 188–195, and 202–209; these read CETCKGSG, CSHCGGSG, CHHCEGTG, and CSDCGGTG.

Belongs to the DnaJ family. As to quaternary structure, homodimer. Zn(2+) serves as cofactor.

It localises to the cytoplasm. In terms of biological role, participates actively in the response to hyperosmotic and heat shock by preventing the aggregation of stress-denatured proteins and by disaggregating proteins, also in an autonomous, DnaK-independent fashion. Unfolded proteins bind initially to DnaJ; upon interaction with the DnaJ-bound protein, DnaK hydrolyzes its bound ATP, resulting in the formation of a stable complex. GrpE releases ADP from DnaK; ATP binding to DnaK triggers the release of the substrate protein, thus completing the reaction cycle. Several rounds of ATP-dependent interactions between DnaJ, DnaK and GrpE are required for fully efficient folding. Also involved, together with DnaK and GrpE, in the DNA replication of plasmids through activation of initiation proteins. This is Chaperone protein DnaJ from Bacillus velezensis (strain DSM 23117 / BGSC 10A6 / LMG 26770 / FZB42) (Bacillus amyloliquefaciens subsp. plantarum).